Reading from the N-terminus, the 339-residue chain is Uroporphyrinogen decarboxylase (339 aa).

Residues 21–25 (RQAGR), Asp-71, Tyr-147, Ser-202, and His-315 each bind substrate.

This sequence belongs to the uroporphyrinogen decarboxylase family. As to quaternary structure, homodimer.

The protein localises to the cytoplasm. It carries out the reaction uroporphyrinogen III + 4 H(+) = coproporphyrinogen III + 4 CO2. Its pathway is porphyrin-containing compound metabolism; protoporphyrin-IX biosynthesis; coproporphyrinogen-III from 5-aminolevulinate: step 4/4. In terms of biological role, catalyzes the decarboxylation of four acetate groups of uroporphyrinogen-III to yield coproporphyrinogen-III. In Helicobacter pylori (strain Shi470), this protein is Uroporphyrinogen decarboxylase.